A 230-amino-acid polypeptide reads, in one-letter code: Urease accessory protein UreF (230 aa).

Belongs to the UreF family. UreD, UreF and UreG form a complex that acts as a GTP-hydrolysis-dependent molecular chaperone, activating the urease apoprotein by helping to assemble the nickel containing metallocenter of UreC. The UreE protein probably delivers the nickel.

It is found in the cytoplasm. Functionally, required for maturation of urease via the functional incorporation of the urease nickel metallocenter. The sequence is that of Urease accessory protein UreF from Cupriavidus necator (strain ATCC 17699 / DSM 428 / KCTC 22496 / NCIMB 10442 / H16 / Stanier 337) (Ralstonia eutropha).